A 286-amino-acid polypeptide reads, in one-letter code: MNDRRLLLVHAHPDDETIVTGATMARYAAEGAHITLVTCTLGEEGEVIPPELAHLASDREGGLGEYRVTELERACAALGVHDQRFLGGKGRYRDSGMMGAPTNSHPACFWQADVDTAAHELAAIIREVRPQVIVTYDDNGGYGHPDHIQAHRVTMRAFAQAADPSLPGTPWQARKLYAIAQPRKLLEESVARMQADPGPFTAPTAVEDIAPGTPDDLVTTRIDGSAYWEKKRDALQAHATQVAVAGTRFALSNGIAQEIHAVEYFTLLHGPEPRRGPDGYETDLFA.

3 residues coordinate Zn(2+): histidine 12, aspartate 15, and histidine 147.

The protein belongs to the MshB deacetylase family. The cofactor is Zn(2+).

It carries out the reaction 1D-myo-inositol 2-acetamido-2-deoxy-alpha-D-glucopyranoside + H2O = 1D-myo-inositol 2-amino-2-deoxy-alpha-D-glucopyranoside + acetate. Functionally, catalyzes the deacetylation of 1D-myo-inositol 2-acetamido-2-deoxy-alpha-D-glucopyranoside (GlcNAc-Ins) in the mycothiol biosynthesis pathway. The protein is 1D-myo-inositol 2-acetamido-2-deoxy-alpha-D-glucopyranoside deacetylase of Thermobifida fusca (strain YX).